The chain runs to 185 residues: Putative manganese efflux pump MntP (185 aa).

A run of 6 helical transmembrane segments spans residues 6 to 26 (IFII…ACGL), 41 to 61 (FHFG…GLTV), 65 to 85 (VETY…GKMI), 107 to 127 (LVFL…SFSI), 132 to 152 (IAFP…FGLW), and 164 to 184 (SHIA…KLLL).

The protein belongs to the MntP (TC 9.B.29) family.

The protein resides in the cell inner membrane. Functionally, probably functions as a manganese efflux pump. This Maridesulfovibrio salexigens (strain ATCC 14822 / DSM 2638 / NCIMB 8403 / VKM B-1763) (Desulfovibrio salexigens) protein is Putative manganese efflux pump MntP.